Reading from the N-terminus, the 218-residue chain is MPTLLLTGFEPFHTHPDNPSAQAAQELHGLELPGGWGVHSALLPVEPHAAGAALTRLLSEQDPGAVLLTGLAAGRPQVTLERVGVGVMDFQIPDNAGQTYRDQPIEPDAPAAYLATLPLRAILAAWREAEIPGDISNSAGLYVCNFVLYHALHWLREHGRGAVPCGFLHVPANAAVALAVPADRPPLPYLPQSEITRAVRVAAEAITAQSSVLQMGKM.

Active-site residues include E81, C144, and H169.

It belongs to the peptidase C15 family. In terms of assembly, homotetramer.

It localises to the cytoplasm. The catalysed reaction is Release of an N-terminal pyroglutamyl group from a polypeptide, the second amino acid generally not being Pro.. In terms of biological role, removes 5-oxoproline from various penultimate amino acid residues except L-proline. This chain is Pyrrolidone-carboxylate peptidase (pcp), found in Deinococcus radiodurans (strain ATCC 13939 / DSM 20539 / JCM 16871 / CCUG 27074 / LMG 4051 / NBRC 15346 / NCIMB 9279 / VKM B-1422 / R1).